A 396-amino-acid chain; its full sequence is Elongation factor Tu (396 aa).

One can recognise a tr-type G domain in the interval 10-206 (KPHVNVGTIG…ALDSYIPTPE (197 aa)). Residues 19–26 (GHVDHGKT) form a G1 region. Residue 19–26 (GHVDHGKT) participates in GTP binding. Thr26 lines the Mg(2+) pocket. The G2 stretch occupies residues 60–64 (GITIN). The segment at 81–84 (DCPG) is G3. GTP-binding positions include 81-85 (DCPGH) and 136-139 (NKCD). A G4 region spans residues 136–139 (NKCD). Positions 174 to 176 (SAK) are G5.

This sequence belongs to the TRAFAC class translation factor GTPase superfamily. Classic translation factor GTPase family. EF-Tu/EF-1A subfamily. Monomer.

The protein localises to the cytoplasm. It carries out the reaction GTP + H2O = GDP + phosphate + H(+). In terms of biological role, GTP hydrolase that promotes the GTP-dependent binding of aminoacyl-tRNA to the A-site of ribosomes during protein biosynthesis. The polypeptide is Elongation factor Tu (Herminiimonas arsenicoxydans).